The sequence spans 132 residues: Large ribosomal subunit protein uL22c (132 aa).

Belongs to the universal ribosomal protein uL22 family. In terms of assembly, part of the 50S ribosomal subunit.

The protein localises to the plastid. The protein resides in the chloroplast. Its function is as follows. This protein binds specifically to 23S rRNA. Functionally, the globular domain of the protein is located near the polypeptide exit tunnel on the outside of the subunit, while an extended beta-hairpin is found that lines the wall of the exit tunnel in the center of the 70S ribosome. The protein is Large ribosomal subunit protein uL22c (rpl22) of Populus trichocarpa (Western balsam poplar).